Reading from the N-terminus, the 350-residue chain is Flap endonuclease 1 (350 aa).

Residues 1 to 101 (MGVNIREVIP…LEIERRKRVK (101 aa)) are N-domain. Aspartate 30, aspartate 83, glutamate 155, glutamate 157, aspartate 176, aspartate 178, and aspartate 239 together coordinate Mg(2+). The tract at residues 119 to 261 (AARRYAQMAA…TALKMVKAHR (143 aa)) is I-domain. An interaction with PCNA region spans residues 340-348 (QQMGLDAWL).

Belongs to the XPG/RAD2 endonuclease family. FEN1 subfamily. In terms of assembly, interacts with PCNA. PCNA stimulates the nuclease activity without altering cleavage specificity. Requires Mg(2+) as cofactor.

Functionally, structure-specific nuclease with 5'-flap endonuclease and 5'-3' exonuclease activities involved in DNA replication and repair. During DNA replication, cleaves the 5'-overhanging flap structure that is generated by displacement synthesis when DNA polymerase encounters the 5'-end of a downstream Okazaki fragment. Binds the unpaired 3'-DNA end and kinks the DNA to facilitate 5' cleavage specificity. Cleaves one nucleotide into the double-stranded DNA from the junction in flap DNA, leaving a nick for ligation. Also involved in the base excision repair (BER) pathway. Acts as a genome stabilization factor that prevents flaps from equilibrating into structures that lead to duplications and deletions. Also possesses 5'-3' exonuclease activity on nicked or gapped double-stranded DNA. This Hyperthermus butylicus (strain DSM 5456 / JCM 9403 / PLM1-5) protein is Flap endonuclease 1.